The chain runs to 487 residues: mRNA cleavage and polyadenylation factor CLP1 (487 aa).

Residues Glu-19, Lys-59, and Asn-134–Thr-139 contribute to the ATP site.

It belongs to the Clp1 family. Clp1 subfamily. In terms of assembly, component of a pre-mRNA cleavage factor complex. Interacts directly with PCF11.

Its subcellular location is the nucleus. In terms of biological role, required for endonucleolytic cleavage during polyadenylation-dependent pre-mRNA 3'-end formation. The protein is mRNA cleavage and polyadenylation factor CLP1 of Laccaria bicolor (strain S238N-H82 / ATCC MYA-4686) (Bicoloured deceiver).